A 672-amino-acid polypeptide reads, in one-letter code: Methionine--tRNA ligase (672 aa).

A 'HIGH' region motif is present at residues Ala-12–His-22. Residues Cys-144, Cys-147, Cys-156, and Cys-159 each contribute to the Zn(2+) site. The 'KMSKS' region signature appears at Lys-330–Ser-334. ATP is bound at residue Thr-333. Residues Asp-573 to Cys-672 enclose the tRNA-binding domain.

It belongs to the class-I aminoacyl-tRNA synthetase family. MetG type 1 subfamily. As to quaternary structure, homodimer. Zn(2+) is required as a cofactor.

The protein localises to the cytoplasm. The catalysed reaction is tRNA(Met) + L-methionine + ATP = L-methionyl-tRNA(Met) + AMP + diphosphate. Functionally, is required not only for elongation of protein synthesis but also for the initiation of all mRNA translation through initiator tRNA(fMet) aminoacylation. The polypeptide is Methionine--tRNA ligase (Methanococcus aeolicus (strain ATCC BAA-1280 / DSM 17508 / OCM 812 / Nankai-3)).